Consider the following 457-residue polypeptide: UDP-glucosyltransferase 45 (457 aa).

His-21 serves as the catalytic Proton acceptor. His-21 lines the an anthocyanidin pocket. The active-site Charge relay is the Asp-112. The UDP-alpha-D-glucose site is built by Thr-134, Gln-336, His-351, Trp-354, Asn-355, Ser-356, Glu-359, Asp-375, and Gln-376.

The protein belongs to the UDP-glycosyltransferase family.

It catalyses the reaction (20S)-protopanaxadiol + UDP-alpha-D-glucose = (20S)-ginsenoside Rh2 + UDP + H(+). It participates in secondary metabolite biosynthesis; terpenoid biosynthesis. In terms of biological role, component of the triterpene saponins (e.g. PPD-type ginsenosides) biosynthetic pathway. Glycosyltransferase that catalyzes the biosynthesis of ginsenoside Rh2 from protopanaxadiol (PPD). The polypeptide is UDP-glucosyltransferase 45 (Panax ginseng (Korean ginseng)).